The primary structure comprises 708 residues: Ubiquitin thioesterase ZRANB1 (708 aa).

A RanBP2-type 1 zinc finger spans residues 3 to 33 (ERGIKWACEYCTYENWPSAIKCTMCRAQRPS). Cysteine 10, cysteine 13, cysteine 24, and cysteine 27 together coordinate Zn(2+). Residues 38–73 (TEDPFKSGSSDVGRDWDPSSTEGGSSPLICPDSSAR) form a disordered region. RanBP2-type zinc fingers lie at residues 84–113 (NANK…QRRT) and 149–178 (RTQH…PRPN). Residues cysteine 90, cysteine 93, cysteine 104, cysteine 107, cysteine 155, cysteine 158, cysteine 169, and cysteine 172 each coordinate Zn(2+). The disordered stretch occupies residues 200–223 (RARWRGSCSSGNSQRRSPPTMKRD). A compositionally biased stretch (polar residues) spans 206–216 (SCSSGNSQRRS). 2 ANK repeats span residues 260 to 290 (KKTD…SGGD) and 313 to 340 (YTLV…QQAA). Positions 432–592 (LYALWNRTAG…RGHFSALVAM (161 aa)) constitute an OTU domain. The active-site Nucleophile is cysteine 443. Histidine 585 (proton acceptor) is an active-site residue.

Belongs to the peptidase C64 family. Interacts with TRAF6. Interacts with APC.

The protein localises to the cytoplasm. It is found in the nucleus. It catalyses the reaction Thiol-dependent hydrolysis of ester, thioester, amide, peptide and isopeptide bonds formed by the C-terminal Gly of ubiquitin (a 76-residue protein attached to proteins as an intracellular targeting signal).. In terms of biological role, ubiquitin thioesterase, which specifically hydrolyzes 'Lys-29'-linked and 'Lys-33'-linked diubiquitin. Also cleaves 'Lys-63'-linked chains, but with 40-fold less efficiency compared to 'Lys-29'-linked ones. Positive regulator of the Wnt signaling pathway that deubiquitinates APC protein, a negative regulator of Wnt-mediated transcription. Acts as a regulator of autophagy by mediating deubiquitination of PIK3C3/VPS34, thereby promoting autophagosome maturation. Plays a role in the regulation of cell morphology and cytoskeletal organization. Required in the stress fiber dynamics and cell migration. In Bos taurus (Bovine), this protein is Ubiquitin thioesterase ZRANB1.